A 395-amino-acid polypeptide reads, in one-letter code: Cyclic AMP-responsive element-binding protein 3-like protein 4 (395 aa).

Topologically, residues 1–295 (MDLGIPDLLD…QTSNKAAQTS (295 aa)) are cytoplasmic. The disordered stretch occupies residues 82-108 (EASPGSDSGISEDPCHPDSPPAPRATS). A bZIP domain is found at 217–280 (VLKKVRRKIR…ISLVAQLRQL (64 aa)). Residues 219–248 (KKVRRKIRNKQSAQDSRRRKKEYIDGLESR) are basic motif. The tract at residues 259–280 (LQKKVQELERHNISLVAQLRQL) is leucine-zipper. Residues 296-316 (TCVLILLFSLALIILPSFSPF) traverse the membrane as a helical; Signal-anchor for type II membrane protein segment. The Lumenal portion of the chain corresponds to 317 to 395 (QSRPEAGSED…IRSVLHADEM (79 aa)). The interval 355 to 395 (RLREPPGAKDANGSTRTLLEKMGGKPRPSGRIRSVLHADEM) is disordered. Asn366 is a glycosylation site (N-linked (GlcNAc...) asparagine).

It belongs to the bZIP family. ATF subfamily. As to quaternary structure, binds DNA as a dimer. Post-translationally, N-glycosylated in the C-terminal region. In terms of processing, controlled by regulated intramembrane proteolysis (RIP). Following ER stress a fragment containing the cytoplasmic transcription factor domain is released by proteolysis. The cleavage seems to be performed sequentially by site-1 and site-2 proteases (PS1 and PS2). PS1 cleavage may be suppressed by a determinant in the C-terminal region. In terms of tissue distribution, according to PubMed:11830526, exclusively expressed in the prostate. Expressed in breast and prostate cancer cell lines. Expressed in prostatic luminal epithelial cells (at protein level). Expression is significantly more abundant in prostate cancer than in benign prostatic tissue (prostatic hyperplasia). According to PubMed:12111373, also expressed in brain, pancreas and skeletal muscle, and at lower levels in small intestine, testis, leukocyte and thymus.

The protein localises to the endoplasmic reticulum membrane. The protein resides in the golgi apparatus membrane. It is found in the nucleus. Its function is as follows. Transcriptional activator that may play a role in the unfolded protein response. Binds to the UPR element (UPRE) but not to CRE element. Preferentially binds DNA with to the consensus sequence 5'-T[GT]ACGT[GA][GT]-3' and has transcriptional activation activity from UPRE. Binds to NF-kappa-B site and has transcriptional activation activity from NF-kappa-B-containing regulatory elements. The chain is Cyclic AMP-responsive element-binding protein 3-like protein 4 (CREB3L4) from Homo sapiens (Human).